A 1181-amino-acid chain; its full sequence is HEAT repeat-containing protein 6 (1181 aa).

One copy of the HEAT 1 repeat lies at 159–198 (LELLGETGLLMKLSDLAQSDPEVRRAAVHCMANLCLSVPG). 2 disordered regions span residues 294-347 (DGRT…PVTG) and 371-407 (LDGS…AEGG). A compositionally biased stretch (polar residues) spans 300–312 (KPQQSESSASRPT). Residues 313 to 325 (LNKKKKSKVKPKK) show a composition bias toward basic residues. Phosphoserine occurs at positions 336, 337, 399, and 402. The span at 383 to 399 (SSPFSSSSWKRVSSSES) shows a compositional bias: low complexity. HEAT repeat units follow at residues 452–490 (ELGS…GSKQ), 514–552 (SSIR…DAPY), and 558–595 (SLLT…THAP). The tract at residues 613-648 (NSNSATPHLSPPDWWKKAPAGPSLEETSVSSPKGSS) is disordered. The residue at position 618 (T618) is a Phosphothreonine. The span at 637 to 646 (EETSVSSPKG) shows a compositional bias: polar residues. S643 carries the post-translational modification Phosphoserine.

This chain is HEAT repeat-containing protein 6 (HEATR6), found in Pongo abelii (Sumatran orangutan).